The primary structure comprises 159 residues: Large ribosomal subunit protein bL35c (159 aa).

The N-terminal 86 residues, 1 to 86, are a transit peptide targeting the chloroplast; sequence MAMASATATL…TSSPSFTVFA (86 aa).

As to quaternary structure, component of the chloroplast large ribosomal subunit (LSU). Mature 70S chloroplast ribosomes of higher plants consist of a small (30S) and a large (50S) subunit. The 30S small subunit contains 1 molecule of ribosomal RNA (16S rRNA) and 24 different proteins. The 50S large subunit contains 3 rRNA molecules (23S, 5S and 4.5S rRNA) and 33 different proteins.

The protein resides in the plastid. It localises to the chloroplast. In terms of biological role, component of the chloroplast ribosome (chloro-ribosome), a dedicated translation machinery responsible for the synthesis of chloroplast genome-encoded proteins, including proteins of the transcription and translation machinery and components of the photosynthetic apparatus. The sequence is that of Large ribosomal subunit protein bL35c (RPL35) from Spinacia oleracea (Spinach).